Here is a 116-residue protein sequence, read N- to C-terminus: Protein Rev (116 aa).

S5 is subject to Phosphoserine; by host CK2. Positions 18 to 26 (IIRLLYQSN) are homomultimerization. The segment at 27 to 49 (PYPEPAGTRQAQRNRRRRWRARQ) is disordered. The short motif at 34–50 (TRQAQRNRRRRWRARQR) is the Nuclear localization signal and RNA-binding (RRE) element. Residues 38–49 (QRNRRRRWRARQ) show a composition bias toward basic residues. Positions 73–84 (LQLPPLERLTLD) match the Nuclear export signal and binding to XPO1 motif. Residues 86–116 (SEDCGTSGEKGVGSPQTSGESPAVLGTGAKE) are disordered. Phosphoserine; by host is present on residues S92 and S99.

Belongs to the HIV-1 REV protein family. Homomultimer; when bound to the RRE. Multimeric assembly is essential for activity and may involve XPO1. Binds to human KPNB1, XPO1, TNPO1, RANBP5 and IPO7. Interacts with the viral Integrase. Interacts with human KHDRBS1. Interacts with human NAP1; this interaction decreases Rev multimerization and stimulates its activity. Interacts with human DEAD-box helicases DDX3 and DDX24; these interactions may serve for viral RNA export to the cytoplasm and packaging, respectively. Interacts with human PSIP1; this interaction may inhibit HIV-1 DNA integration by promoting dissociation of the Integrase-LEDGF/p75 complex. Asymmetrically arginine dimethylated at one site by host PRMT6. Methylation impairs the RNA-binding activity and export of viral RNA from the nucleus to the cytoplasm. In terms of processing, phosphorylated by protein kinase CK2. Presence of, and maybe binding to the N-terminus of the regulatory beta subunit of CK2 is necessary for CK2-mediated Rev's phosphorylation.

It localises to the host nucleus. The protein resides in the host nucleolus. It is found in the host cytoplasm. Functionally, escorts unspliced or incompletely spliced viral pre-mRNAs (late transcripts) out of the nucleus of infected cells. These pre-mRNAs carry a recognition sequence called Rev responsive element (RRE) located in the env gene, that is not present in fully spliced viral mRNAs (early transcripts). This function is essential since most viral proteins are translated from unspliced or partially spliced pre-mRNAs which cannot exit the nucleus by the pathway used by fully processed cellular mRNAs. Rev itself is translated from a fully spliced mRNA that readily exits the nucleus. Rev's nuclear localization signal (NLS) binds directly to KPNB1/Importin beta-1 without previous binding to KPNA1/Importin alpha-1. KPNB1 binds to the GDP bound form of RAN (Ran-GDP) and targets Rev to the nucleus. In the nucleus, the conversion from Ran-GDP to Ran-GTP dissociates Rev from KPNB1 and allows Rev's binding to the RRE in viral pre-mRNAs. Rev multimerization on the RRE via cooperative assembly exposes its nuclear export signal (NES) to the surface. Rev can then form a complex with XPO1/CRM1 and Ran-GTP, leading to nuclear export of the complex. Conversion from Ran-GTP to Ran-GDP mediates dissociation of the Rev/RRE/XPO1/RAN complex, so that Rev can return to the nucleus for a subsequent round of export. Beside KPNB1, also seems to interact with TNPO1/Transportin-1, RANBP5/IPO5 and IPO7/RANBP7 for nuclear import. The nucleoporin-like HRB/RIP is an essential cofactor that probably indirectly interacts with Rev to release HIV RNAs from the perinuclear region to the cytoplasm. The chain is Protein Rev from Human immunodeficiency virus type 1 group M subtype H (isolate VI991) (HIV-1).